Reading from the N-terminus, the 459-residue chain is tRNA modification GTPase MnmE (459 aa).

(6S)-5-formyl-5,6,7,8-tetrahydrofolate contacts are provided by arginine 29, glutamate 86, and lysine 125. Residues 221–382 form the TrmE-type G domain; sequence GMNVVIAGRP…LTEHLKAVMG (162 aa). Residue asparagine 231 coordinates K(+). GTP-binding positions include 231 to 236, 250 to 256, and 275 to 278; these read NAGKSS, TNIEGTT, and DTAG. Residue serine 235 participates in Mg(2+) binding. The K(+) site is built by threonine 250, isoleucine 252, and threonine 255. Residue threonine 256 participates in Mg(2+) binding. Residue lysine 459 coordinates (6S)-5-formyl-5,6,7,8-tetrahydrofolate.

It belongs to the TRAFAC class TrmE-Era-EngA-EngB-Septin-like GTPase superfamily. TrmE GTPase family. In terms of assembly, homodimer. Heterotetramer of two MnmE and two MnmG subunits. Requires K(+) as cofactor.

It localises to the cytoplasm. Its function is as follows. Exhibits a very high intrinsic GTPase hydrolysis rate. Involved in the addition of a carboxymethylaminomethyl (cmnm) group at the wobble position (U34) of certain tRNAs, forming tRNA-cmnm(5)s(2)U34. This chain is tRNA modification GTPase MnmE, found in Marinomonas sp. (strain MWYL1).